Consider the following 203-residue polypeptide: MKIRSSEITMSAVNKSQYPAEGIPEIALAGRSNVGKSSIINTLLNRRNFARTSQTPGKTRTINFYLINNEFYFVDLPGYGYAKIAKSEKEKWGGIMERYLESRQELCSIFLLVDIRHEPTADDKLMYEWIKHFGYNCVVIATKADKISRGQYQKHISIIRKKLQMESSEKVIPVSSLKKTGVEELWEEIVNQYNQHGYEITVD.

Residues G22 to Q195 form the EngB-type G domain. GTP-binding positions include G30–S37, G57–T61, D75–G78, T142–D145, and V174–S176. Mg(2+)-binding residues include S37 and T59.

Belongs to the TRAFAC class TrmE-Era-EngA-EngB-Septin-like GTPase superfamily. EngB GTPase family. Mg(2+) is required as a cofactor.

Its function is as follows. Necessary for normal cell division and for the maintenance of normal septation. This is Probable GTP-binding protein EngB from Clostridioides difficile (strain 630) (Peptoclostridium difficile).